Reading from the N-terminus, the 343-residue chain is Aspartate carbamoyltransferase catalytic subunit (343 aa).

Carbamoyl phosphate contacts are provided by Arg-91 and Thr-92. Lys-119 provides a ligand contact to L-aspartate. Carbamoyl phosphate contacts are provided by Arg-141, His-171, and Gln-174. The L-aspartate site is built by Arg-204 and Arg-259. The carbamoyl phosphate site is built by Gly-300 and Pro-301.

The protein belongs to the aspartate/ornithine carbamoyltransferase superfamily. ATCase family. Heterododecamer (2C3:3R2) of six catalytic PyrB chains organized as two trimers (C3), and six regulatory PyrI chains organized as three dimers (R2).

The enzyme catalyses carbamoyl phosphate + L-aspartate = N-carbamoyl-L-aspartate + phosphate + H(+). The protein operates within pyrimidine metabolism; UMP biosynthesis via de novo pathway; (S)-dihydroorotate from bicarbonate: step 2/3. In terms of biological role, catalyzes the condensation of carbamoyl phosphate and aspartate to form carbamoyl aspartate and inorganic phosphate, the committed step in the de novo pyrimidine nucleotide biosynthesis pathway. The chain is Aspartate carbamoyltransferase catalytic subunit from Burkholderia ambifaria (strain MC40-6).